Consider the following 224-residue polypeptide: GTP-binding protein RHO3 (224 aa).

Residue 22–29 (GDGACGKT) coordinates GTP. Residues 44-52 (YEPTVFENY) carry the Effector region motif. GTP-binding positions include 69 to 73 (DTAGQ) and 127 to 130 (LKCD). The segment at 205-224 (TPKGARDSAPEAESSSCTIM) is disordered. Cysteine methyl ester is present on Cys-221. Cys-221 carries S-geranylgeranyl cysteine lipidation. Residues 222–224 (TIM) constitute a propeptide, removed in mature form.

This sequence belongs to the small GTPase superfamily. Rho family.

The protein resides in the cell membrane. Involved in the regulation of actin polarization. Rho proteins are required for distinct steps during polarized hyphal growth of A.gossypii. The protein is GTP-binding protein RHO3 (RHO3) of Eremothecium gossypii (strain ATCC 10895 / CBS 109.51 / FGSC 9923 / NRRL Y-1056) (Yeast).